We begin with the raw amino-acid sequence, 821 residues long: Frameshifted structural polyprotein (821 aa).

Positions 1–106 are disordered; the sequence is MNRGFFNMLG…KPKPGKRQRM (106 aa). Over residues 38–49 the composition is skewed to polar residues; it reads LASQIQQLTTAV. Basic residues predominate over residues 67 to 106; that stretch reads PPPRQKKQAPKQPPKPKKPKTQEKKKKQPAKPKPGKRQRM. A ribosome-binding region spans residues 93-101; the sequence is KQPAKPKPG. The region spanning 114–264 is the Peptidase S3 domain; sequence RLFDVKNEDG…KTTPEGTEEW (151 aa). Residues H141, D163, and S215 each act as charge relay system in the active site. Residues 265 to 279 are functions as an uncleaved signal peptide for the precursor of protein E3/E2; that stretch reads SAAPLVTAMCLLGNV. N-linked (GlcNAc...) asparagine; by host glycosylation occurs at N278. The cysteines at positions 283 and 289 are disulfide-linked. 2 N-linked (GlcNAc...) asparagine; by host glycosylation sites follow: N524 and N646. The chain crosses the membrane as a helical span at residues 696–716; it reads ILAVASATVAMMIGVTVAVLC. S-palmitoyl cysteine; by host attachment occurs at residues C724, C744, and C745. 2 consecutive transmembrane segments (helical) span residues 726–746 and 764–784; these read TPYA…LCCV and NSQP…IVLM.

This sequence belongs to the alphavirus frameshifted structural polyprotein family. In terms of assembly, homomultimer. Interacts with host karyopherin KPNA4; this interaction allows the nuclear import of the viral capsid protein. Interacts with spike glycoprotein E2. Interacts with host IRAK1; the interaction leads to inhibition of IRAK1-dependent signaling. As to quaternary structure, the precursor of protein E3/E2 and E1 form a heterodimer shortly after synthesis. Processing of the precursor of protein E3/E2 into E2 and E3 results in a heterodimer of the spike glycoproteins E2 and E1. Spike at virion surface are constituted of three E2-E1 heterodimers. In terms of processing, specific enzymatic cleavages in vivo yield mature proteins. Capsid protein is auto-cleaved during polyprotein translation, unmasking a signal peptide at the N-terminus of the precursor of E3/E2. The remaining polyprotein is then targeted to the host endoplasmic reticulum, where host signal peptidase cleaves it into pE2 and TF. pE2 is further processed to mature E3 and E2 by host furin in trans-Golgi vesicle. Post-translationally, palmitoylated via thioester bonds. These palmitoylations may induce disruption of the C-terminus transmembrane. This would result in the reorientation of E2 C-terminus from lumenal to cytoplasmic side. Palmitoylated via thioester bonds.

The protein localises to the virion. The protein resides in the host cytoplasm. It localises to the host cell membrane. It is found in the host nucleus. Its subcellular location is the virion membrane. It catalyses the reaction Autocatalytic release of the core protein from the N-terminus of the togavirus structural polyprotein by hydrolysis of a -Trp-|-Ser- bond.. In terms of biological role, forms an icosahedral capsid with a T=4 symmetry composed of 240 copies of the capsid protein surrounded by a lipid membrane through which penetrate 80 spikes composed of trimers of E1-E2 heterodimers. The capsid protein binds to the viral RNA genome at a site adjacent to a ribosome binding site for viral genome translation following genome release. Possesses a protease activity that results in its autocatalytic cleavage from the nascent structural protein. Following its self-cleavage, the capsid protein transiently associates with ribosomes, and within several minutes the protein binds to viral RNA and rapidly assembles into icosahedric core particles. The resulting nucleocapsid eventually associates with the cytoplasmic domain of the spike glycoprotein E2 at the cell membrane, leading to budding and formation of mature virions. In case of infection, new virions attach to target cells and after clathrin-mediated endocytosis their membrane fuses with the host endosomal membrane. This leads to the release of the nucleocapsid into the cytoplasm, followed by an uncoating event necessary for the genomic RNA to become accessible. The uncoating might be triggered by the interaction of capsid proteins with ribosomes. Binding of ribosomes would release the genomic RNA since the same region is genomic RNA-binding and ribosome-binding. Specifically inhibits interleukin-1 receptor-associated kinase 1/IRAK1-dependent signaling during viral entry, representing a means by which the alphaviruses may evade innate immune detection and activation prior to viral gene expression. Functionally, provides the signal sequence for the translocation of the precursor of protein E3/E2 to the host endoplasmic reticulum. Furin-cleaved E3 remains associated with spike glycoprotein E1 and mediates pH protection of the latter during the transport via the secretory pathway. After virion release from the host cell, the assembly protein E3 is gradually released in the extracellular space. Plays an essential role in viral attachment to target host cell, by binding to the cell receptor. Synthesized as a pE2 precursor which is processed by furin at the cell membrane just before virion budding, giving rise to E2-E1 heterodimer. The pE2-E1 heterodimer is stable, whereas E2-E1 is unstable and dissociate at low pH. pE2 is processed at the last step, presumably to avoid E1 fusion activation before its final export to cell surface. E2 C-terminus contains a transitory transmembrane that would be disrupted by palmitoylation, resulting in reorientation of the C-terminal tail from lumenal to cytoplasmic side. This step is critical since E2 C-terminus is involved in budding by interacting with capsid proteins. This release of E2 C-terminus in cytoplasm occurs lately in protein export, and precludes premature assembly of particles at the endoplasmic reticulum membrane. Its function is as follows. Plays a role in viral assembly and release. In Sindbis virus (SINV), this protein is Frameshifted structural polyprotein.